The sequence spans 310 residues: ADP-L-glycero-D-manno-heptose-6-epimerase (310 aa).

Residues Leu10–Ile11, Asp31–Asn32, Lys38, Lys53, Glu75–Ser79, and Asn92 each bind NADP(+). Tyr140 acts as the Proton acceptor in catalysis. Lys144 lines the NADP(+) pocket. Residue Asn169 coordinates substrate. NADP(+) is bound by residues Val170 and Lys178. Catalysis depends on Lys178, which acts as the Proton acceptor. Substrate is bound by residues Ser180, His187, Phe201 to Ser204, Arg209, and Tyr272.

Belongs to the NAD(P)-dependent epimerase/dehydratase family. HldD subfamily. As to quaternary structure, homopentamer. NADP(+) serves as cofactor.

The enzyme catalyses ADP-D-glycero-beta-D-manno-heptose = ADP-L-glycero-beta-D-manno-heptose. The protein operates within nucleotide-sugar biosynthesis; ADP-L-glycero-beta-D-manno-heptose biosynthesis; ADP-L-glycero-beta-D-manno-heptose from D-glycero-beta-D-manno-heptose 7-phosphate: step 4/4. Functionally, catalyzes the interconversion between ADP-D-glycero-beta-D-manno-heptose and ADP-L-glycero-beta-D-manno-heptose via an epimerization at carbon 6 of the heptose. The protein is ADP-L-glycero-D-manno-heptose-6-epimerase of Erwinia tasmaniensis (strain DSM 17950 / CFBP 7177 / CIP 109463 / NCPPB 4357 / Et1/99).